A 40-amino-acid polypeptide reads, in one-letter code: Large ribosomal subunit protein bL36 (40 aa).

This sequence belongs to the bacterial ribosomal protein bL36 family.

The polypeptide is Large ribosomal subunit protein bL36 (Corynebacterium kroppenstedtii (strain DSM 44385 / JCM 11950 / CIP 105744 / CCUG 35717)).